The following is a 102-amino-acid chain: Co-chaperonin GroES (102 aa).

It belongs to the GroES chaperonin family. Heptamer of 7 subunits arranged in a ring. Interacts with the chaperonin GroEL.

It is found in the cytoplasm. Its function is as follows. Together with the chaperonin GroEL, plays an essential role in assisting protein folding. The GroEL-GroES system forms a nano-cage that allows encapsulation of the non-native substrate proteins and provides a physical environment optimized to promote and accelerate protein folding. GroES binds to the apical surface of the GroEL ring, thereby capping the opening of the GroEL channel. The polypeptide is Co-chaperonin GroES (Chlamydia caviae (strain ATCC VR-813 / DSM 19441 / 03DC25 / GPIC) (Chlamydophila caviae)).